Consider the following 118-residue polypeptide: Large ribosomal subunit protein bL20 (118 aa).

The protein belongs to the bacterial ribosomal protein bL20 family.

Binds directly to 23S ribosomal RNA and is necessary for the in vitro assembly process of the 50S ribosomal subunit. It is not involved in the protein synthesizing functions of that subunit. The polypeptide is Large ribosomal subunit protein bL20 (Psychrobacter sp. (strain PRwf-1)).